The following is a 272-amino-acid chain: Large ribosomal subunit protein uL2 (272 aa).

The interval 222–272 (GVAMNPIDHPLGGGEGKSSGGRAACTPWGKPEGVKTRKNKRTDKFIIKRRK) is disordered. Residues 263 to 272 (TDKFIIKRRK) show a composition bias toward basic and acidic residues.

The protein belongs to the universal ribosomal protein uL2 family. In terms of assembly, part of the 50S ribosomal subunit. Forms a bridge to the 30S subunit in the 70S ribosome.

One of the primary rRNA binding proteins. Required for association of the 30S and 50S subunits to form the 70S ribosome, for tRNA binding and peptide bond formation. It has been suggested to have peptidyltransferase activity; this is somewhat controversial. Makes several contacts with the 16S rRNA in the 70S ribosome. The chain is Large ribosomal subunit protein uL2 from Thermodesulfovibrio yellowstonii (strain ATCC 51303 / DSM 11347 / YP87).